Here is a 79-residue protein sequence, read N- to C-terminus: Hematopoietic cell signal transducer (79 aa).

Positions 1 to 17 are cleaved as a signal peptide; that stretch reads MDPPGYLLFLLLLPVAA. Residues 18–35 are Extracellular-facing; sequence SQTSAGSCSGCGTLSLPL. A helical transmembrane segment spans residues 36–56; the sequence is LAGLVAADAVMSLLIVGVVFV. Topologically, residues 57–79 are cytoplasmic; that stretch reads CMRPHGRPAQEDGRVYINMPGRG. At Tyr72 the chain carries Phosphotyrosine. A GRB2 binding site region spans residues 72-74; that stretch reads YIN. The segment at 72-75 is PIK3R1 binding site; sequence YINM.

The protein belongs to the DAP10 family. In terms of assembly, homodimer; Disulfide-linked. Interacts with KLRK1 to form a stable complex, which results in surface expression of both proteins, whereas alone, it is minimally expressed. Interacts with PIK3R1 and GRB2. Interacts with CLEC5A. Forms an CLEC5A/TYROBP/HCST trimolecular complex depending almost solely on TYROBP. Heterohexamer composed of four subunits of HCST/DAP10 and two subunits of KLRK1. Interacts (via transmembrane domain) with KLRK1 isoform 1 (via transmembrane domain); the interaction is required for KLRK1 cell surface expression on naive NK cells and activated CD8(+) T-cells, but is dispensable on activated TYROBP-expressing NK cells. Interacts (via transmembrane domain) with KLRK1 isoform 2 (via transmembrane domain); the interaction is required for KLRK1 NK cell surface expression and induces NK cell-mediated cytotoxicity. Interacts with CD300H. In terms of processing, phosphorylated; PIK3R1 and GRB2 associate specifically with tyrosine-phosphorylated HCST. O-glycosylated.

Its subcellular location is the membrane. Transmembrane adapter protein which associates with KLRK1 to form an activation receptor KLRK1-HCST in lymphoid and myeloid cells; this receptor plays a major role in triggering cytotoxicity against target cells expressing cell surface ligands such as MHC class I chain-related MICA and MICB, and UL16-binding proteins (ULBPs); these ligands are up-regulated by stress conditions and pathological state such as viral infection and tumor transformation. Functions as a docking site for PI3-kinase PIK3R1 and GRB2. Interaction of ULBPs with KLRK1-HCST triggers calcium mobilization and activation of the PIK3R1, MAP2K/ERK, and JAK2/STAT5 signaling pathways. Both PIK3R1 and GRB2 are required for full KLRK1-HCST-mediated activation and ultimate killing of target cells. In NK cells, KLRK1-HCST signaling directly induces cytotoxicity and enhances cytokine production initiated via DAP12/TYROBP-associated receptors. In T-cells, it provides primarily costimulation for TCR-induced signals. KLRK1-HCST receptor plays a role in immune surveillance against tumors and is required for cytolysis of tumors cells; indeed, melanoma cells that do not express KLRK1 ligands escape from immune surveillance mediated by NK cells. This is Hematopoietic cell signal transducer (Hcst) from Mus musculus (Mouse).